Reading from the N-terminus, the 30-residue chain is SIPCGESCVYIPCITTIVGCSCKDKVCYKN.

Residues 1 to 30 (SIPCGESCVYIPCITTIVGCSCKDKVCYKN) constitute a cross-link (cyclopeptide (Ser-Asn)). 3 disulfides stabilise this stretch: C4–C20, C8–C22, and C13–C27.

Contains 3 disulfide bonds. In terms of processing, this is a cyclic peptide. In terms of tissue distribution, expressed in pod but not in flower, stem, shoot, leaf, seed, root and nodule (at protein level).

Functionally, probably participates in a plant defense mechanism. This chain is Cliotide T6, found in Clitoria ternatea (Butterfly pea).